A 683-amino-acid polypeptide reads, in one-letter code: MPEAQSRFRRRLLLYYGLFTLGLFGFVGMMGLLEKSNADALWLGYVFLFITIAIYACIGLICRTSDLNEYYVASRRVPALFNGMAIAADWMSAASFIGLAGILFASGYEGLAYVMGWTGGYCLVAFLLAPYLRKYGGYTIPDFLAARYGNGKPGGNLPVRAIAVLAASLCSFVYLVAQIQGVGLVVTRFIGVEFAVGIFFGLAGILVCSFLGGMRAVTWTQVAQYIMMIVAFLVTVSMIAWKHHHEALPQLSYGTLLSQLDAREQQLEREPAEQAVREYYRQQAILLQERIARLPDSFAQERDALDARLQDLRTRNAPLRDIKSLERERLEFPRDPAAAQQQWNQQRADALARSRHSLSSTEPYPAASEQERKTKRLNFVLLVFCLMVGTASLPHILTRLYTTPSVKETRNSVAWAVFFIALLYVSAPTLAALVKFEFFQHLVGTPYAELPQWVVQWRKVDPPVFGIRDVNGDGIVQWAEILLQPDMIVLAAPEIAGLPYVISGLIAAGALAAALSTADGLLLTIANALSHDVFYHMVDRQASHQRRVTTAKIVLLGVALFASYVTSLRPGNILFLVGAAFSLAASSFFPVLVLGIFWRRTTAAGAVAGMAAGLGVAVYYIIVNYPFFTRMTGIFGNRWFGVDPIASGAFGVPAGFAVAIIVSLLTPRNAPVIDRLVSYLRKG.

The next 14 helical transmembrane spans lie at 12–32 (LLLY…MMGL), 41–61 (LWLG…IGLI), 84–104 (MAIA…GILF), 110–130 (GLAY…LLAP), 162–182 (IAVL…IQGV), 194–214 (FAVG…LGGM), 221–241 (QVAQ…MIAW), 377–397 (LNFV…PHIL), 413–433 (VAWA…LAAL), 495–515 (IAGL…AAAL), 548–568 (VTTA…VTSL), 573–593 (ILFL…PVLV), 603–623 (AAGA…YIIV), and 645–665 (IASG…VSLL).

It belongs to the sodium:solute symporter (SSF) (TC 2.A.21) family.

The protein resides in the cell membrane. This is an uncharacterized protein from Cupriavidus necator (strain ATCC 17699 / DSM 428 / KCTC 22496 / NCIMB 10442 / H16 / Stanier 337) (Ralstonia eutropha).